A 437-amino-acid chain; its full sequence is Leucine-rich repeat flightless-interacting protein 2 (437 aa).

At S18 the chain carries Phosphoserine. Positions 22–49 (EALSNIAREAEARLAAKRAARAEARDIR) form a coiled coil. Residues 33–62 (ARLAAKRAARAEARDIRMRELERQQRESSS) are compositionally biased toward basic and acidic residues. Residues 33-152 (ARLAAKRAAR…DTSLSELRES (120 aa)) form a disordered region. Positions 63–74 (KDITGTHWSRAS) are enriched in polar residues. Positions 77–105 (KRRDMMYDSIKDRSSRVSSLLDEKSDKQY) are enriched in basic and acidic residues. Positions 110-139 (TRPSSRNSASATTPLSGNSSRRGSGDTSSL) are enriched in polar residues. Residues S114, S117, S125, S129, and S133 each carry the phosphoserine modification. Residue T136 is modified to Phosphothreonine. Phosphoserine is present on residues S137 and S138. 2 coiled-coil regions span residues 143–239 (DTSL…LIEK) and 282–430 (LDVR…KANR).

The protein belongs to the LRRFIP family. As to quaternary structure, interacts with DVL3 and FLII. Weakly interacts with MYD88 in resting cells. Following LPS-stimulation, the interaction with MYD88 is rapidly enhanced; the complex gradually dissociates to basal levels after 6 hours of stimulation. Interaction with MYD88 is regulated by LPS-induced phosphorylation. In the presence of LPS, competes with FLII for MYD88-binding.

Its function is as follows. May function as activator of the canonical Wnt signaling pathway, in association with DVL3, upstream of CTNNB1/beta-catenin. Positively regulates Toll-like receptor (TLR) signaling in response to agonist probably by competing with the negative FLII regulator for MYD88-binding. The polypeptide is Leucine-rich repeat flightless-interacting protein 2 (Lrrfip2) (Rattus norvegicus (Rat)).